The primary structure comprises 190 residues: Crossover junction endodeoxyribonuclease RuvC (190 aa).

Catalysis depends on residues D8, E67, and D139. D8, E67, and D139 together coordinate Mg(2+).

The protein belongs to the RuvC family. Homodimer which binds Holliday junction (HJ) DNA. The HJ becomes 2-fold symmetrical on binding to RuvC with unstacked arms; it has a different conformation from HJ DNA in complex with RuvA. In the full resolvosome a probable DNA-RuvA(4)-RuvB(12)-RuvC(2) complex forms which resolves the HJ. Mg(2+) is required as a cofactor.

The protein resides in the cytoplasm. The catalysed reaction is Endonucleolytic cleavage at a junction such as a reciprocal single-stranded crossover between two homologous DNA duplexes (Holliday junction).. Its function is as follows. The RuvA-RuvB-RuvC complex processes Holliday junction (HJ) DNA during genetic recombination and DNA repair. Endonuclease that resolves HJ intermediates. Cleaves cruciform DNA by making single-stranded nicks across the HJ at symmetrical positions within the homologous arms, yielding a 5'-phosphate and a 3'-hydroxyl group; requires a central core of homology in the junction. The consensus cleavage sequence is 5'-(A/T)TT(C/G)-3'. Cleavage occurs on the 3'-side of the TT dinucleotide at the point of strand exchange. HJ branch migration catalyzed by RuvA-RuvB allows RuvC to scan DNA until it finds its consensus sequence, where it cleaves and resolves the cruciform DNA. This chain is Crossover junction endodeoxyribonuclease RuvC, found in Actinobacillus succinogenes (strain ATCC 55618 / DSM 22257 / CCUG 43843 / 130Z).